We begin with the raw amino-acid sequence, 315 residues long: Probable cell division protein WhiA (315 aa).

Residues 277 to 311 (SLQELGAMMPSGQISKSGVNHRLRKLNQIAEGYQQ) constitute a DNA-binding region (H-T-H motif).

It belongs to the WhiA family.

In terms of biological role, involved in cell division and chromosome segregation. This chain is Probable cell division protein WhiA, found in Lacticaseibacillus paracasei (strain ATCC 334 / BCRC 17002 / CCUG 31169 / CIP 107868 / KCTC 3260 / NRRL B-441) (Lactobacillus paracasei).